The following is a 414-amino-acid chain: Histidine--tRNA ligase (414 aa).

Belongs to the class-II aminoacyl-tRNA synthetase family. Homodimer.

It is found in the cytoplasm. It catalyses the reaction tRNA(His) + L-histidine + ATP = L-histidyl-tRNA(His) + AMP + diphosphate + H(+). The sequence is that of Histidine--tRNA ligase from Anaeromyxobacter dehalogenans (strain 2CP-1 / ATCC BAA-258).